Reading from the N-terminus, the 111-residue chain is Large ribosomal subunit protein uL24 (111 aa).

This sequence belongs to the universal ribosomal protein uL24 family. As to quaternary structure, part of the 50S ribosomal subunit.

Functionally, one of two assembly initiator proteins, it binds directly to the 5'-end of the 23S rRNA, where it nucleates assembly of the 50S subunit. In terms of biological role, one of the proteins that surrounds the polypeptide exit tunnel on the outside of the subunit. This is Large ribosomal subunit protein uL24 from Chlamydia trachomatis serovar A (strain ATCC VR-571B / DSM 19440 / HAR-13).